We begin with the raw amino-acid sequence, 144 residues long: TSC22 domain family protein 1 (144 aa).

The tract at residues 77-98 is leucine-zipper; that stretch reads LKEQIKELIEKNSQLEQENNLL. Residues 109–144 are disordered; that stretch reads QFQAQLQTGSPPATTQPQGSTQPPAQPASQGSGPTA.

Belongs to the TSC-22/Dip/Bun family. As to quaternary structure, forms homodimers. Forms a heterodimer with TSC22D4/THG1. Interacts with histone H1-2. Interacts with GNL3.

It localises to the cytoplasm. Its subcellular location is the nucleus. The protein resides in the mitochondrion. Transcriptional repressor. Plays a role in the repression of hematopoietic precursor cell growth. Promotes IL2 deprivation-induced apoptosis in T-lymphocytes, via repression of TSC22D3/GILZ transcription and activation of the caspase cascade. Positively regulates cell death in response to TGFB3 during mammary gland involution. The polypeptide is TSC22 domain family protein 1 (Bathyergus suillus (Cape dune mole rat)).